A 172-amino-acid chain; its full sequence is GTP-dependent dephospho-CoA kinase (172 aa).

GTP-binding residues include aspartate 40, valine 41, valine 42, aspartate 59, and glutamate 112.

It belongs to the GTP-dependent DPCK family.

The catalysed reaction is 3'-dephospho-CoA + GTP = GDP + CoA + H(+). It participates in cofactor biosynthesis; coenzyme A biosynthesis. In terms of biological role, catalyzes the GTP-dependent phosphorylation of the 3'-hydroxyl group of dephosphocoenzyme A to form coenzyme A (CoA). The polypeptide is GTP-dependent dephospho-CoA kinase (Methanospirillum hungatei JF-1 (strain ATCC 27890 / DSM 864 / NBRC 100397 / JF-1)).